A 489-amino-acid polypeptide reads, in one-letter code: Putative L,D-transpeptidase HI_1667 (489 aa).

Residues 10–29 (LSLFALSLSMMMSGCVLVGL) form a helical membrane-spanning segment. Positions 254 to 433 (NGIFVNIPSY…ETRKNTVLAS (180 aa)) constitute a L,D-TPase catalytic domain. Residue histidine 384 is the Proton donor/acceptor of the active site. Catalysis depends on cysteine 403, which acts as the Nucleophile.

Belongs to the YkuD family.

The protein localises to the membrane. It participates in cell wall biogenesis; peptidoglycan biosynthesis. This chain is Putative L,D-transpeptidase HI_1667, found in Haemophilus influenzae (strain ATCC 51907 / DSM 11121 / KW20 / Rd).